Consider the following 410-residue polypeptide: E3 ubiquitin-protein ligase MARCHF4 (410 aa).

The N-terminal stretch at 1 to 18 (MLMPLCGLLWWWWCCCSG) is a signal peptide. The disordered stretch occupies residues 92-136 (GPREVVGREPPPVPPPPPLPPSSVEDDWGGPATEPPASLLSSASS). Residues 100 to 112 (EPPPVPPPPPLPP) are compositionally biased toward pro residues. Positions 126-136 (PPASLLSSASS) are enriched in low complexity. The RING-CH-type zinc finger occupies 155–215 (DSGMRTPLCR…ELCYYKYHVI (61 aa)). Residues cysteine 163, cysteine 166, cysteine 179, cysteine 181, histidine 189, cysteine 192, cysteine 205, and cysteine 208 each coordinate Zn(2+). The next 2 helical transmembrane spans lie at 238 to 258 (VAAA…LIWS) and 272 to 292 (LFQI…GLII). Disordered regions lie at residues 324–372 (EDQK…SGPL) and 390–410 (PHEQ…VTTV). The span at 333–346 (NPRTSSSTQANIPS) shows a compositional bias: polar residues. Over residues 352–366 (AGTPAPEQGPAQAAG) the composition is skewed to low complexity.

In terms of tissue distribution, expressed in brain and placenta.

Its subcellular location is the golgi apparatus membrane. The catalysed reaction is S-ubiquitinyl-[E2 ubiquitin-conjugating enzyme]-L-cysteine + [acceptor protein]-L-lysine = [E2 ubiquitin-conjugating enzyme]-L-cysteine + N(6)-ubiquitinyl-[acceptor protein]-L-lysine.. It functions in the pathway protein modification; protein ubiquitination. E3 ubiquitin-protein ligase that may mediate ubiquitination of MHC-I and CD4, and promote their subsequent endocytosis and sorting to lysosomes via multivesicular bodies. E3 ubiquitin ligases accept ubiquitin from an E2 ubiquitin-conjugating enzyme in the form of a thioester and then directly transfer the ubiquitin to targeted substrates. This Homo sapiens (Human) protein is E3 ubiquitin-protein ligase MARCHF4.